The primary structure comprises 418 residues: Serine hydroxymethyltransferase (418 aa).

Residues Leu-121 and Gly-125–Leu-127 contribute to the (6S)-5,6,7,8-tetrahydrofolate site. N6-(pyridoxal phosphate)lysine is present on Lys-230. Ser-355–Phe-357 contributes to the (6S)-5,6,7,8-tetrahydrofolate binding site.

It belongs to the SHMT family. As to quaternary structure, homodimer. The cofactor is pyridoxal 5'-phosphate.

It localises to the cytoplasm. It carries out the reaction (6R)-5,10-methylene-5,6,7,8-tetrahydrofolate + glycine + H2O = (6S)-5,6,7,8-tetrahydrofolate + L-serine. Its pathway is one-carbon metabolism; tetrahydrofolate interconversion. It functions in the pathway amino-acid biosynthesis; glycine biosynthesis; glycine from L-serine: step 1/1. Its function is as follows. Catalyzes the reversible interconversion of serine and glycine with tetrahydrofolate (THF) serving as the one-carbon carrier. This reaction serves as the major source of one-carbon groups required for the biosynthesis of purines, thymidylate, methionine, and other important biomolecules. Also exhibits THF-independent aldolase activity toward beta-hydroxyamino acids, producing glycine and aldehydes, via a retro-aldol mechanism. The protein is Serine hydroxymethyltransferase of Streptococcus pyogenes serotype M18 (strain MGAS8232).